The primary structure comprises 354 residues: DNA replication and repair protein RecF (354 aa).

Residue 30–37 (GDNGSGKT) participates in ATP binding.

It belongs to the RecF family.

It localises to the cytoplasm. Functionally, the RecF protein is involved in DNA metabolism; it is required for DNA replication and normal SOS inducibility. RecF binds preferentially to single-stranded, linear DNA. It also seems to bind ATP. The polypeptide is DNA replication and repair protein RecF (Idiomarina loihiensis (strain ATCC BAA-735 / DSM 15497 / L2-TR)).